Here is a 1181-residue protein sequence, read N- to C-terminus: Katanin p80 WD40 repeat-containing subunit B1 homolog KTN80.2 (1181 aa).

WD repeat units lie at residues 13-53, 56-95, 98-137, 140-181, 183-221, 224-264, and 266-303; these read AHSA…SLMS, GHTS…MVRA, GHRS…CIQT, GHSR…HEFK, HEGP…LIGS, PEAT…DGVD, and GWST…IEPY. The DWD box motif lies at 114-130; sequence FLASGSSDANLKIWDIR. Disordered stretches follow at residues 361 to 383, 503 to 597, 702 to 739, 754 to 869, and 988 to 1008; these read AHKS…NKSL, KPPR…ESKS, TSMA…QTRT, KMKS…VIST, and TKTQ…ISGR. Polar residues-rich tracts occupy residues 365 to 379 and 509 to 526; these read GSLS…QAGD and RSPS…STDS. Composition is skewed to basic and acidic residues over residues 530–553 and 569–585; these read DSKK…DDRG and RSER…ELKS. Polar residues-rich tracts occupy residues 703 to 739, 754 to 791, 822 to 841, and 850 to 859; these read SMAT…QTRT, KMKS…TRTS, SATN…QAKT, and ILNQRQTTNM. A compositionally biased stretch (basic and acidic residues) spans 998–1008; sequence TQKEEPQISGR.

The protein belongs to the WD repeat KATNB1 family. As to quaternary structure, component of KTN80-KTN1 complexes composed of a hexamer of KTN1-KTN80 heterodimers that sense microtubule (MT) geometry to confer precise MT severing. Interacts directly with AAA1/KTN1. Interacts with subunits of the CUL4-based E3 ligase complex DDB1A and DDB1B. In terms of tissue distribution, expressed at low levels in siliques, flowers, leaves, stems and roots.

The protein resides in the cytoplasm. It is found in the cytoskeleton. Its function is as follows. May participate in a complex which severs microtubules in an ATP-dependent manner. Microtubule severing may promote rapid reorganization of cellular microtubule arrays. Confers precision to microtubule (MT) severing by specific targeting of KTN1 to MT cleavage sites such as crossover or branching nucleation sites. Together with other KTN80s, regulates cell elongation by modulating MT organization. Negative regulator of abscisic acid (ABA) responses. May function as a substrate receptor for cullin-RING ubiquitin ligase 4 complexes (CRL4), a family of E3 ligases involved in protein degradation. The sequence is that of Katanin p80 WD40 repeat-containing subunit B1 homolog KTN80.2 from Arabidopsis thaliana (Mouse-ear cress).